Consider the following 234-residue polypeptide: Ribonuclease HII (234 aa).

An RNase H type-2 domain is found at 30–221 (GPVAGVDEAG…VRNAAMGSSL (192 aa)). A divalent metal cation-binding residues include Asp36, Glu37, and Asp130.

The protein belongs to the RNase HII family. Requires Mn(2+) as cofactor. Mg(2+) is required as a cofactor.

It is found in the cytoplasm. It catalyses the reaction Endonucleolytic cleavage to 5'-phosphomonoester.. Functionally, endonuclease that specifically degrades the RNA of RNA-DNA hybrids. This Mycobacteroides abscessus (strain ATCC 19977 / DSM 44196 / CCUG 20993 / CIP 104536 / JCM 13569 / NCTC 13031 / TMC 1543 / L948) (Mycobacterium abscessus) protein is Ribonuclease HII.